Here is a 181-residue protein sequence, read N- to C-terminus: Glucose-1-phosphate adenylyltransferase large subunit 2 (181 aa).

The protein belongs to the bacterial/plant glucose-1-phosphate adenylyltransferase family. Heterotetramer. As to expression, leaves.

It is found in the plastid. The protein localises to the chloroplast. The protein resides in the amyloplast. It carries out the reaction alpha-D-glucose 1-phosphate + ATP + H(+) = ADP-alpha-D-glucose + diphosphate. It functions in the pathway glycan biosynthesis; starch biosynthesis. With respect to regulation, highly active without 3'phosphoglycerate, and is only slightly affected by the activator 3'phosphoglycerate and inhibitor orthophosphate. In terms of biological role, this protein plays a role in synthesis of starch. It catalyzes the synthesis of the activated glycosyl donor, ADP-glucose from Glc-1-P and ATP. The protein is Glucose-1-phosphate adenylyltransferase large subunit 2 of Hordeum vulgare (Barley).